The chain runs to 101 residues: Small ribosomal subunit protein uS14 (101 aa).

The protein belongs to the universal ribosomal protein uS14 family. As to quaternary structure, part of the 30S ribosomal subunit. Contacts proteins S3 and S10.

Its function is as follows. Binds 16S rRNA, required for the assembly of 30S particles and may also be responsible for determining the conformation of the 16S rRNA at the A site. This chain is Small ribosomal subunit protein uS14, found in Aeromonas hydrophila subsp. hydrophila (strain ATCC 7966 / DSM 30187 / BCRC 13018 / CCUG 14551 / JCM 1027 / KCTC 2358 / NCIMB 9240 / NCTC 8049).